We begin with the raw amino-acid sequence, 171 residues long: Large ribosomal subunit protein uL10 (171 aa).

The protein belongs to the universal ribosomal protein uL10 family. Part of the ribosomal stalk of the 50S ribosomal subunit. The N-terminus interacts with L11 and the large rRNA to form the base of the stalk. The C-terminus forms an elongated spine to which L12 dimers bind in a sequential fashion forming a multimeric L10(L12)X complex.

Forms part of the ribosomal stalk, playing a central role in the interaction of the ribosome with GTP-bound translation factors. The chain is Large ribosomal subunit protein uL10 (rplJ) from Lactococcus lactis subsp. lactis (strain IL1403) (Streptococcus lactis).